Consider the following 1141-residue polypeptide: Serine-aspartate repeat-containing protein E (1141 aa).

Residues 1-52 (MINRDNKKAITKKGMISNRLNKFSIRKYTVGTASILVGTTLIFGLGNQEAKA) form the signal peptide. Positions 23-34 (FSIRKYTVGTAS) match the YSIRK-G/S signaling motif motif. The interval 53-601 (AENTSTENAK…GDGTVKPEEK (549 aa)) is ligand binding A region. The tract at residues 54-248 (ENTSTENAKQ…RSTKPVATAP (195 aa)) is disordered. Basic and acidic residues predominate over residues 61-75 (AKQDDATTSDNKEVV). The segment covering 77 to 90 (ETENNSTTENDSTN) has biased composition (low complexity). A compositionally biased stretch (basic and acidic residues) spans 92–108 (IKKETNTDSQPEAKEES). The segment covering 109-126 (TTSSTQQQQNNVTATTET) has biased composition (low complexity). Positions 130–145 (NIEKENVKPSTDKTAT) are enriched in basic and acidic residues. Over residues 159–207 (NYTNNDVTTKPSTSEIQTKPTTPQESTNIENSQPQPTPSKVDNQVTDAT) the composition is skewed to polar residues. The span at 216–241 (SKEELKNNPEKLKELVRNDNNTDRST) shows a compositional bias: basic and acidic residues. CNA-B domains lie at 602-714 (LYKI…YKEP), 715-824 (KYNL…YKTP), and 825-935 (KYSL…EEDT). Residues 899 to 1117 (VTNTTEDDKD…GSENNGSNNA (219 aa)) are disordered. Composition is skewed to acidic residues over residues 903-913 (TEDDKDADGGE) and 930-1080 (YFEE…DSDS). The LPXTG sorting signal signature appears at 1104–1108 (LPETG). Pentaglycyl murein peptidoglycan amidated threonine is present on T1107. A propeptide spans 1108 to 1141 (GSENNGSNNATLFGGLFAALGSLLLFGRRKKQNK) (removed by sortase).

It belongs to the serine-aspartate repeat-containing protein (SDr) family. Interacts with host complement factor H/CFAH (via C-terminus). Interacts with host complement regulator C4BPA.

The protein resides in the secreted. It localises to the cell wall. Functionally, cell surface-associated calcium-binding protein which plays an important role in adhesion and pathogenesis. Contributes to the resistance to killing by innate immune components in blood and thus attenuates bacterial clearance by interacting with host complement factor H/CFAH and modulating its activity. Also inhibits bacterial opsonization and killing by interacting with host complement regulator C4BPA and thus inhibiting classical complement pathway activation. This is Serine-aspartate repeat-containing protein E (sdrE) from Staphylococcus aureus (strain N315).